Reading from the N-terminus, the 175-residue chain is Ferritin light chain (175 aa).

Ser-2 bears the N-acetylserine mark. Residues 7–156 enclose the Ferritin-like diiron domain; sequence QNYSTDVEAA…DHLTNLHRLG (150 aa). Fe cation contacts are provided by Glu-54, Glu-57, Glu-58, Glu-61, and Glu-64. The segment at 54 to 61 is catalytic site for iron oxidation; sequence ELAEEKRE.

Belongs to the ferritin family. In terms of assembly, oligomer of 24 subunits. There are two types of subunits: L (light) chain and H (heavy) chain. The major chain can be light or heavy, depending on the species and tissue type. The functional molecule forms a roughly spherical shell with a diameter of 12 nm and contains a central cavity into which the insoluble mineral iron core is deposited. Interacts with NCOA4.

The protein localises to the cytoplasmic vesicle. It is found in the autophagosome. The protein resides in the cytoplasm. It localises to the autolysosome. Stores iron in a soluble, non-toxic, readily available form. Important for iron homeostasis. Iron is taken up in the ferrous form and deposited as ferric hydroxides after oxidation. Also plays a role in delivery of iron to cells. Mediates iron uptake in capsule cells of the developing kidney. Delivery to lysosomes by the cargo receptor NCOA4 for autophagic degradation and release or iron. In Pongo abelii (Sumatran orangutan), this protein is Ferritin light chain (FTL).